Consider the following 634-residue polypeptide: Kelch-like protein 22 (634 aa).

Alanine 2 is subject to N-acetylalanine. A BTB domain is found at 50-117; sequence FDVVLVVEGR…IYTSELELSL (68 aa). 6 Kelch repeats span residues 299-349, 350-399, 400-446, 448-493, 494-544, and 545-593; these read CVVG…VLNN, FVYL…VVGK, YIYA…TLQG, MYIT…ALLD, KLFV…VLDN, and RIYV…VLTL. Threonine 463 is subject to Phosphothreonine. Tyrosine 466 carries the post-translational modification Phosphotyrosine. Threonine 475 carries the phosphothreonine modification. The segment at 600–634 is disordered; that stretch reads EQPRGTPNRSQADADFASEVMSVSDWEEFDNSSED. Threonine 605 is subject to Phosphothreonine. Residues 624–634 are compositionally biased toward acidic residues; that stretch reads DWEEFDNSSED.

As to quaternary structure, component of the BCR(KLHL22) E3 ubiquitin ligase complex, at least composed of CUL3, KLHL22 and RBX1. Interacts with PLK1. Interacts with DEPDC5 (via DEP domain); the interaction depends on amino acid availability. Interacts with YWHAE; required for the nuclear localization of KLHL22 upon amino acid starvation.

Its subcellular location is the cytoplasm. It localises to the cytosol. It is found in the cytoskeleton. The protein localises to the microtubule organizing center. The protein resides in the centrosome. Its subcellular location is the spindle. It localises to the nucleus. It is found in the lysosome. It participates in protein modification; protein ubiquitination. In terms of biological role, substrate-specific adapter of a BCR (BTB-CUL3-RBX1) E3 ubiquitin ligase complex required for chromosome alignment and localization of PLK1 at kinetochores. The BCR(KLHL22) ubiquitin ligase complex mediates monoubiquitination of PLK1, leading to PLK1 dissociation from phosphoreceptor proteins and subsequent removal from kinetochores, allowing silencing of the spindle assembly checkpoint (SAC) and chromosome segregation. Monoubiquitination of PLK1 does not lead to PLK1 degradation. The BCR(KLHL22) ubiquitin ligase complex is also responsible for the amino acid-stimulated 'Lys-48' polyubiquitination and proteasomal degradation of DEPDC5. Through the degradation of DEPDC5, releases the GATOR1 complex-mediated inhibition of the TORC1 pathway. It is therefore an amino acid-dependent activator within the amino acid-sensing branch of the TORC1 pathway, indirectly regulating different cellular processes including cell growth and autophagy. The chain is Kelch-like protein 22 from Rattus norvegicus (Rat).